Consider the following 228-residue polypeptide: PKHD-type hydroxylase YbiX (228 aa).

The region spanning 78–177 (TLSTPLFNRY…RVASFIWIQS (100 aa)) is the Fe2OG dioxygenase domain. Fe cation contacts are provided by histidine 96, aspartate 98, and histidine 158. Arginine 168 contributes to the 2-oxoglutarate binding site.

It depends on Fe(2+) as a cofactor. L-ascorbate serves as cofactor.

The sequence is that of PKHD-type hydroxylase YbiX from Escherichia coli O157:H7.